Consider the following 149-residue polypeptide: Transcriptional regulator MraZ (149 aa).

SpoVT-AbrB domains lie at 7-54 (KYVN…GISH) and 83-126 (AVQL…QPQN).

The protein belongs to the MraZ family. As to quaternary structure, forms oligomers.

The protein localises to the cytoplasm. The protein resides in the nucleoid. This chain is Transcriptional regulator MraZ, found in Rickettsia conorii (strain ATCC VR-613 / Malish 7).